Reading from the N-terminus, the 318-residue chain is Lymphatic vessel endothelial hyaluronic acid receptor 1 (318 aa).

A signal peptide spans M1–G23. Topologically, residues A24–T234 are extracellular. The 91-residue stretch at G39–N129 folds into the Link domain. Residue N52 is glycosylated (N-linked (GlcNAc...) asparagine). 2 disulfide bridges follow: C60–C127 and C84–C105. N-linked (GlcNAc...) asparagine glycosylation is present at N129. The chain crosses the membrane as a helical span at residues A235–V255. At K256–V318 the chain is on the cytoplasmic side. Basic and acidic residues predominate over residues A284–S305. Residues A284–V318 form a disordered region.

In terms of assembly, homodimer; disulfide-linked. Interacts with PDGFB and IGFBP3. Forms a transient ternary complex with PDGFB and PDGFRB in TGN. Post-translationally, O-glycosylated.

It localises to the membrane. Functionally, ligand-specific transporter trafficking between intracellular organelles (TGN) and the plasma membrane. Plays a role in autocrine regulation of cell growth mediated by growth regulators containing cell surface retention sequence binding (CRS). May act as a hyaluronan (HA) transporter, either mediating its uptake for catabolism within lymphatic endothelial cells themselves, or its transport into the lumen of afferent lymphatic vessels for subsequent re-uptake and degradation in lymph nodes. Binds to pericelluar hyaluronan matrices deposited on the surface of leukocytes and facilitates cell adhesion and migration through lymphatic endothelium. This is Lymphatic vessel endothelial hyaluronic acid receptor 1 (Lyve1) from Mus musculus (Mouse).